The chain runs to 726 residues: Ribonuclease R (726 aa).

The region spanning 262 to 590 is the RNB domain; sequence RIDLRHLPFF…LVHRVIKNLL (329 aa). The 82-residue stretch at 642 to 723 folds into the S1 motif domain; that stretch reads GDVLTGVISN…NERKIELSLY (82 aa).

This sequence belongs to the RNR ribonuclease family. RNase R subfamily. Monomer.

It localises to the cytoplasm. The catalysed reaction is Exonucleolytic cleavage in the 3'- to 5'-direction to yield nucleoside 5'-phosphates.. In terms of biological role, 3'-5' exoribonuclease that releases 5'-nucleoside monophosphates and is involved in maturation of structured RNAs. This Buchnera aphidicola subsp. Schizaphis graminum (strain Sg) protein is Ribonuclease R.